The chain runs to 368 residues: HECT-type ubiquitin ligase-interacting protein apyA (368 aa).

It belongs to the arrestin family. Interacts with hulA.

Its function is as follows. May be involved in signaling by recognizing appropriately phosphorylated substrates via its arrestin domains and then recruit a HECT-type ubiquitin ligase such as hulA, leading to ubiquitination of the substrate, providing a link between ubiquitination and phosphorylation in protein regulation and stability. This Emericella nidulans (strain FGSC A4 / ATCC 38163 / CBS 112.46 / NRRL 194 / M139) (Aspergillus nidulans) protein is HECT-type ubiquitin ligase-interacting protein apyA (apyA).